The following is a 447-amino-acid chain: 3-phosphoshikimate 1-carboxyvinyltransferase (447 aa).

Lys36, Ser37, and Arg41 together coordinate 3-phosphoshikimate. Lys36 contributes to the phosphoenolpyruvate binding site. Residues Gly109 and Arg138 each coordinate phosphoenolpyruvate. 3-phosphoshikimate contacts are provided by Ser183, Gln185, Asp333, and Lys360. Gln185 contributes to the phosphoenolpyruvate binding site. Asp333 acts as the Proton acceptor in catalysis. 2 residues coordinate phosphoenolpyruvate: Arg364 and Arg406.

This sequence belongs to the EPSP synthase family. As to quaternary structure, monomer.

The protein localises to the cytoplasm. It catalyses the reaction 3-phosphoshikimate + phosphoenolpyruvate = 5-O-(1-carboxyvinyl)-3-phosphoshikimate + phosphate. The protein operates within metabolic intermediate biosynthesis; chorismate biosynthesis; chorismate from D-erythrose 4-phosphate and phosphoenolpyruvate: step 6/7. Catalyzes the transfer of the enolpyruvyl moiety of phosphoenolpyruvate (PEP) to the 5-hydroxyl of shikimate-3-phosphate (S3P) to produce enolpyruvyl shikimate-3-phosphate and inorganic phosphate. The chain is 3-phosphoshikimate 1-carboxyvinyltransferase from Synechocystis sp. (strain ATCC 27184 / PCC 6803 / Kazusa).